Reading from the N-terminus, the 432-residue chain is Glutamyl-tRNA reductase (432 aa).

Substrate contacts are provided by residues 49-52 (TCNR), S109, 114-116 (EGQ), and Q120. The Nucleophile role is filled by C50. 198–203 (GAGRMS) provides a ligand contact to NADP(+).

The protein belongs to the glutamyl-tRNA reductase family. As to quaternary structure, homodimer.

It catalyses the reaction (S)-4-amino-5-oxopentanoate + tRNA(Glu) + NADP(+) = L-glutamyl-tRNA(Glu) + NADPH + H(+). The protein operates within porphyrin-containing compound metabolism; protoporphyrin-IX biosynthesis; 5-aminolevulinate from L-glutamyl-tRNA(Glu): step 1/2. It participates in porphyrin-containing compound metabolism; chlorophyll biosynthesis. Functionally, catalyzes the NADPH-dependent reduction of glutamyl-tRNA(Glu) to glutamate 1-semialdehyde (GSA). The protein is Glutamyl-tRNA reductase of Synechococcus sp. (strain CC9605).